A 623-amino-acid polypeptide reads, in one-letter code: V-type proton ATPase catalytic subunit A (623 aa).

252–259 (GAFGCGKT) provides a ligand contact to ATP.

It belongs to the ATPase alpha/beta chains family. In terms of assembly, V-ATPase is a heteromultimeric enzyme composed of a peripheral catalytic V1 complex (main components: subunits A, B, C, D, E, and F) attached to an integral membrane V0 proton pore complex (main component: the proteolipid protein).

The enzyme catalyses ATP + H2O + 4 H(+)(in) = ADP + phosphate + 5 H(+)(out). Functionally, catalytic subunit of the peripheral V1 complex of vacuolar ATPase. V-ATPase vacuolar ATPase is responsible for acidifying a variety of intracellular compartments in eukaryotic cells. The polypeptide is V-type proton ATPase catalytic subunit A (Vigna radiata var. radiata (Mung bean)).